Here is a 183-residue protein sequence, read N- to C-terminus: Phosphinothricin N-acetyltransferase (183 aa).

Residues 8–173 (ADIRRATEAD…WQLDFSLPVP (166 aa)) enclose the N-acetyltransferase domain. Acetyl-CoA is bound by residues 91 to 93 (VYV), 99 to 104 (RTGLGS), and Asn-130.

Belongs to the acetyltransferase family. PAT/BAR subfamily.

It carries out the reaction phosphinothricin + acetyl-CoA = N-acetylphosphinothricin + CoA + H(+). Inactivates phosphinothricin (PPT) by transfer of an acetyl group from acetyl CoA. Can also acetylate demethylphosphinothricin but not PTT or glutamate. This enzyme is an effector of phosphinothricin tripeptide (PTT or bialaphos) resistance. The chain is Phosphinothricin N-acetyltransferase from Streptomyces hygroscopicus.